The primary structure comprises 599 residues: Proline dehydrogenase 1, mitochondrial (599 aa).

Disordered stretches follow at residues 20-39 and 152-180; these read STKPQAQEQPPASPEALRGC and EEAERKEMESCTSEAERDGSGANKREKQY. Over residues 23 to 39 the composition is skewed to low complexity; the sequence is PQAQEQPPASPEALRGC. Over residues 153–180 the composition is skewed to basic and acidic residues; sequence EAERKEMESCTSEAERDGSGANKREKQY. Residues lysine 356, lysine 367, and lysine 485 each carry the N6-acetyllysine modification.

It belongs to the proline oxidase family. The cofactor is FAD. Expressed in liver, kidney, heart and to a lesser extent in brain, lung and muscle.

The protein resides in the mitochondrion matrix. It catalyses the reaction L-proline + a quinone = (S)-1-pyrroline-5-carboxylate + a quinol + H(+). It functions in the pathway amino-acid degradation; L-proline degradation into L-glutamate; L-glutamate from L-proline: step 1/2. Converts proline to delta-1-pyrroline-5-carboxylate. The chain is Proline dehydrogenase 1, mitochondrial (Prodh) from Mus musculus (Mouse).